The following is a 100-amino-acid chain: Urease subunit gamma (100 aa).

It belongs to the urease gamma subunit family. As to quaternary structure, heterotrimer of UreA (gamma), UreB (beta) and UreC (alpha) subunits. Three heterotrimers associate to form the active enzyme.

Its subcellular location is the cytoplasm. The catalysed reaction is urea + 2 H2O + H(+) = hydrogencarbonate + 2 NH4(+). It functions in the pathway nitrogen metabolism; urea degradation; CO(2) and NH(3) from urea (urease route): step 1/1. This is Urease subunit gamma from Streptomyces avermitilis (strain ATCC 31267 / DSM 46492 / JCM 5070 / NBRC 14893 / NCIMB 12804 / NRRL 8165 / MA-4680).